The following is a 273-amino-acid chain: 2,3,4,5-tetrahydropyridine-2,6-dicarboxylate N-succinyltransferase (273 aa).

Residues arginine 104 and aspartate 141 each coordinate substrate.

This sequence belongs to the transferase hexapeptide repeat family. Homotrimer.

It is found in the cytoplasm. The catalysed reaction is (S)-2,3,4,5-tetrahydrodipicolinate + succinyl-CoA + H2O = (S)-2-succinylamino-6-oxoheptanedioate + CoA. It participates in amino-acid biosynthesis; L-lysine biosynthesis via DAP pathway; LL-2,6-diaminopimelate from (S)-tetrahydrodipicolinate (succinylase route): step 1/3. The chain is 2,3,4,5-tetrahydropyridine-2,6-dicarboxylate N-succinyltransferase from Psychrobacter cryohalolentis (strain ATCC BAA-1226 / DSM 17306 / VKM B-2378 / K5).